The following is a 160-amino-acid chain: Major pollen allergen Bet v 1-G (160 aa).

Residues Lys55, Tyr82, Tyr84, and Asn101 each contribute to the brassinolide site.

This sequence belongs to the BetVI family.

It localises to the cytoplasm. Its function is as follows. May be a general steroid carrier protein. The protein is Major pollen allergen Bet v 1-G (BETV1G) of Betula pendula (European white birch).